The primary structure comprises 109 residues: Cell division protein ZapA (109 aa).

Residues 21–99 (PDQRDALNQA…IEQALLEQGR (79 aa)) adopt a coiled-coil conformation.

This sequence belongs to the ZapA family. Type 1 subfamily. In terms of assembly, homodimer. Interacts with FtsZ.

Its subcellular location is the cytoplasm. Activator of cell division through the inhibition of FtsZ GTPase activity, therefore promoting FtsZ assembly into bundles of protofilaments necessary for the formation of the division Z ring. It is recruited early at mid-cell but it is not essential for cell division. This Shigella boydii serotype 18 (strain CDC 3083-94 / BS512) protein is Cell division protein ZapA.